A 145-amino-acid polypeptide reads, in one-letter code: Leghemoglobin-2 (145 aa).

Residues A3–Y145 form the Globin domain. Nitrated tyrosine occurs at positions 26 and 31. S46 is a binding site for heme b. S46 carries the post-translational modification Phosphoserine. Residue H62 coordinates O2. K65, H93, and K96 together coordinate heme b. At Y134 the chain carries Nitrated tyrosine.

This sequence belongs to the plant globin family. In terms of assembly, monomer. Post-translationally, nitrated in effective nodules and particularly in hypoxic conditions; this mechanism may play a protective role in the symbiosis by buffering toxic peroxynitrite NO(2)(-). Nitration level decrease during nodule senescence. Phosphorylation at Ser-46 disrupts the molecular environment of its porphyrin ring oxygen binding pocket, thus leading to a reduced oxygen consumption and to the delivery of oxygen O(2) to symbiosomes. In terms of tissue distribution, root nodules.

The protein resides in the cytoplasm. It localises to the cytosol. It is found in the nucleus. Leghemoglobin that reversibly binds oxygen O(2) through a pentacoordinated heme iron. In root nodules, facilitates the diffusion of oxygen to the bacteroids while preventing the bacterial nitrogenase from being inactivated by buffering dioxygen, nitric oxide and carbon monoxide, and promoting the formation of reactive oxygen species (ROS, e.g. H(2)O(2)). This role is essential for symbiotic nitrogen fixation (SNF). The sequence is that of Leghemoglobin-2 from Vigna unguiculata (Cowpea).